The sequence spans 186 residues: Peptidyl-tRNA hydrolase (186 aa).

Y14 serves as a coordination point for tRNA. H19 serves as the catalytic Proton acceptor. 3 residues coordinate tRNA: F64, N66, and N112.

Belongs to the PTH family. As to quaternary structure, monomer.

It localises to the cytoplasm. The enzyme catalyses an N-acyl-L-alpha-aminoacyl-tRNA + H2O = an N-acyl-L-amino acid + a tRNA + H(+). Functionally, hydrolyzes ribosome-free peptidyl-tRNAs (with 1 or more amino acids incorporated), which drop off the ribosome during protein synthesis, or as a result of ribosome stalling. Catalyzes the release of premature peptidyl moieties from peptidyl-tRNA molecules trapped in stalled 50S ribosomal subunits, and thus maintains levels of free tRNAs and 50S ribosomes. This chain is Peptidyl-tRNA hydrolase, found in Mycoplasma capricolum subsp. capricolum (strain California kid / ATCC 27343 / NCTC 10154).